The following is a 477-amino-acid chain: Metallopeptidase AprA (477 aa).

Residues 1–20 (MSKAKDKAIVSAAQASTAYS) form the signal peptide. His183 contributes to the Zn(2+) binding site. Residue Glu184 is part of the active site. Zn(2+)-binding residues include His187 and His193. Ca(2+) contacts are provided by Arg264, Gly266, Thr268, Asp296, Gly298, Gly299, Asp301, Thr338, Glu340, Gly345, Gly347, Asp349, Asn354, Ala356, Asn358, Gly362, Gly363, Ala364, Gly365, Asp367, Gly371, Ala372, Gly373, Gly374, Asp376, Gly380, Gly381, Ala382, Gly383, Asp385, Asp394, Asp401, Asp411, Asp453, Ser455, and Asp461. 3 Hemolysin-type calcium-binding repeats span residues 343 to 360 (FGGAGNDLIIGNNAANVI), 361 to 378 (KGGAGNDLIYGAGGADQL), and 379 to 391 (WGGAGNDTFVFGA).

The protein belongs to the peptidase M10B family. The cofactor is Ca(2+). Requires Zn(2+) as cofactor.

The protein localises to the secreted. Its activity is regulated as follows. Is completely inhibited by the metal cation chelators 1,10-phenanthroline and EDTA, but PMSF, pepstatin A and E-64 have no effect on activity. In terms of biological role, peptidase able to cleave azocasein and the milk substrates beta-casein and Na-caseinate. Can withstand UHT processing of milk, and is able to spoil UHT milk over the storage period. This is Metallopeptidase AprA from Pseudomonas marginalis (Pseudomonas panacis).